Consider the following 283-residue polypeptide: NAD kinase (283 aa).

The active-site Proton acceptor is aspartate 66. Residues aspartate 66–glycine 67, asparagine 137–aspartate 138, arginine 165, aspartate 167, and threonine 178–serine 183 each bind NAD(+).

It belongs to the NAD kinase family. The cofactor is a divalent metal cation.

The protein resides in the cytoplasm. It carries out the reaction NAD(+) + ATP = ADP + NADP(+) + H(+). Involved in the regulation of the intracellular balance of NAD and NADP, and is a key enzyme in the biosynthesis of NADP. Catalyzes specifically the phosphorylation on 2'-hydroxyl of the adenosine moiety of NAD to yield NADP. This chain is NAD kinase, found in Chloroherpeton thalassium (strain ATCC 35110 / GB-78).